The following is a 226-amino-acid chain: Cytidylate kinase (226 aa).

ATP is bound at residue 12–20; it reads GPSGAGKGT.

Belongs to the cytidylate kinase family. Type 1 subfamily.

It is found in the cytoplasm. It carries out the reaction CMP + ATP = CDP + ADP. It catalyses the reaction dCMP + ATP = dCDP + ADP. This chain is Cytidylate kinase, found in Xanthomonas campestris pv. campestris (strain 8004).